Reading from the N-terminus, the 95-residue chain is Small ribosomal subunit protein bS18 (95 aa).

This sequence belongs to the bacterial ribosomal protein bS18 family. In terms of assembly, part of the 30S ribosomal subunit. Forms a tight heterodimer with protein bS6.

Binds as a heterodimer with protein bS6 to the central domain of the 16S rRNA, where it helps stabilize the platform of the 30S subunit. The chain is Small ribosomal subunit protein bS18 from Acidiphilium cryptum (strain JF-5).